Consider the following 197-residue polypeptide: Nascent polypeptide-associated complex subunit alpha (197 aa).

A compositionally biased stretch (basic and acidic residues) spans methionine 1–glutamine 18. The disordered stretch occupies residues methionine 1–isoleucine 30. Over residues valine 19–glutamate 28 the composition is skewed to acidic residues. The region spanning serine 58–alanine 123 is the NAC-A/B domain. Positions threonine 134–serine 155 are disordered. Positions glutamate 144–serine 155 are enriched in acidic residues. Residues isoleucine 158–leucine 195 enclose the UBA domain.

Belongs to the NAC-alpha family.

Functionally, may promote appropriate targeting of ribosome-nascent polypeptide complexes. This chain is Nascent polypeptide-associated complex subunit alpha, found in Caenorhabditis briggsae.